The sequence spans 249 residues: Exosome complex component Rrp41 (249 aa).

It belongs to the RNase PH family. Rrp41 subfamily. In terms of assembly, component of the archaeal exosome complex. Forms a hexameric ring-like arrangement composed of 3 Rrp41-Rrp42 heterodimers. The hexameric ring associates with a trimer of Rrp4 and/or Csl4 subunits.

Its subcellular location is the cytoplasm. Its function is as follows. Catalytic component of the exosome, which is a complex involved in RNA degradation. Has 3'-&gt;5' exoribonuclease activity. Can also synthesize heteromeric RNA-tails. The protein is Exosome complex component Rrp41 of Thermococcus gammatolerans (strain DSM 15229 / JCM 11827 / EJ3).